The following is a 393-amino-acid chain: 26S proteasome regulatory subunit 10B (393 aa).

ATP is bound at residue 178-185; that stretch reads GPPGTGKT.

Belongs to the AAA ATPase family.

Its subcellular location is the cytoplasm. The protein resides in the nucleus. The 26S proteasome is involved in the ATP-dependent degradation of ubiquitinated proteins. The regulatory (or ATPase) complex confers ATP dependency and substrate specificity to the 26S complex. This Dictyostelium discoideum (Social amoeba) protein is 26S proteasome regulatory subunit 10B (psmC6).